We begin with the raw amino-acid sequence, 87 residues long: Omega-lycotoxin-Am1g (87 aa).

An N-terminal signal peptide occupies residues 1-17; sequence MKLSIFFVLFFIAIAYC. Positions 18–40 are excised as a propeptide; sequence QPEFLDDEEDEVEETLPVAEEGR. Cystine bridges form between Cys-44-Cys-59, Cys-51-Cys-64, Cys-58-Cys-84, and Cys-66-Cys-82.

The protein belongs to the neurotoxin omega-lctx family. Expressed by the venom gland.

It localises to the secreted. Functionally, modulates Cav2.1/CACNA1A voltage-gated calcium channels (P/Q-type currents) in rat cerebellar Purkinje cells and hippocampal CA1-CA3 neurons. At saturating concentrations (&gt;10 nM) decelerates activation kinetics and slightly increases peak amplitude without affecting deactivation kinetics. In vivo, does not cause death when intravenously injected into mice. In rat models, through its activity on Cav2.1/CACNA1A, has an ameliorative effect on memory defects provoked by hyperstimulation of N-methyl-D-aspartate receptors (NMDARs) in the hippocampus. In Alopecosa marikovskyi (Wolf spider), this protein is Omega-lycotoxin-Am1g.